We begin with the raw amino-acid sequence, 429 residues long: 3-phosphoshikimate 1-carboxyvinyltransferase (429 aa).

Residues K20, S21, and R25 each coordinate 3-phosphoshikimate. K20 is a phosphoenolpyruvate binding site. Positions 89 and 118 each coordinate phosphoenolpyruvate. 3-phosphoshikimate-binding residues include S164, S165, Q166, S192, D311, and K338. Q166 contacts phosphoenolpyruvate. Catalysis depends on D311, which acts as the Proton acceptor. Phosphoenolpyruvate is bound by residues R342 and R384.

The protein belongs to the EPSP synthase family. In terms of assembly, monomer.

Its subcellular location is the cytoplasm. The enzyme catalyses 3-phosphoshikimate + phosphoenolpyruvate = 5-O-(1-carboxyvinyl)-3-phosphoshikimate + phosphate. It participates in metabolic intermediate biosynthesis; chorismate biosynthesis. Its function is as follows. Catalyzes the transfer of the enolpyruvyl moiety of phosphoenolpyruvate (PEP) to the 5-hydroxyl of shikimate-3-phosphate (S3P) to produce enolpyruvyl shikimate-3-phosphate and inorganic phosphate. This Methanococcus maripaludis (strain C6 / ATCC BAA-1332) protein is 3-phosphoshikimate 1-carboxyvinyltransferase.